Here is a 179-residue protein sequence, read N- to C-terminus: UPF0398 protein SSU05_0416 (179 aa).

The protein belongs to the UPF0398 family.

In Streptococcus suis (strain 05ZYH33), this protein is UPF0398 protein SSU05_0416.